Here is a 150-residue protein sequence, read N- to C-terminus: Large ribosomal subunit protein bL9 (150 aa).

It belongs to the bacterial ribosomal protein bL9 family.

Its function is as follows. Binds to the 23S rRNA. The polypeptide is Large ribosomal subunit protein bL9 (Ruthia magnifica subsp. Calyptogena magnifica).